The chain runs to 88 residues: DNA-directed RNA polymerase subunit omega (88 aa).

This sequence belongs to the RNA polymerase subunit omega family. As to quaternary structure, the RNAP catalytic core consists of 2 alpha, 1 beta, 1 beta' and 1 omega subunit. When a sigma factor is associated with the core the holoenzyme is formed, which can initiate transcription.

The enzyme catalyses RNA(n) + a ribonucleoside 5'-triphosphate = RNA(n+1) + diphosphate. Promotes RNA polymerase assembly. Latches the N- and C-terminal regions of the beta' subunit thereby facilitating its interaction with the beta and alpha subunits. This Yersinia pestis (strain Pestoides F) protein is DNA-directed RNA polymerase subunit omega.